Consider the following 1011-residue polypeptide: Ankyrin repeat domain-containing protein 18B (1011 aa).

5 ANK repeats span residues 67–96, 100–129, 133–162, 166–195, and 199–228; these read KDRT…QINI, LNRT…NPNI, YGNT…NIEA, EGNT…NIHA, and FKRT…HISS. Disordered stretches follow at residues 264-330 and 533-554; these read LRND…GKKK and MHPN…SEER. Coiled coils occupy residues 277–319, 385–639, 692–722, and 752–908; these read ENLK…ENKQ, NEEM…ELVD, ISLL…CLEM, and FKKL…EAFA. The segment covering 280 to 293 has biased composition (basic residues); sequence KKRKKRKKLKKRKE. Over residues 294–319 the composition is skewed to basic and acidic residues; the sequence is GAKAEHNLKVASEEKQERLERSENKQ.

The protein is Ankyrin repeat domain-containing protein 18B (ANKRD18B) of Homo sapiens (Human).